The sequence spans 428 residues: UPF0597 protein PBPRB0240 (428 aa).

The protein belongs to the UPF0597 family.

The chain is UPF0597 protein PBPRB0240 from Photobacterium profundum (strain SS9).